Reading from the N-terminus, the 206-residue chain is 3-isopropylmalate dehydratase small subunit (206 aa).

This sequence belongs to the LeuD family. LeuD type 1 subfamily. As to quaternary structure, heterodimer of LeuC and LeuD.

It catalyses the reaction (2R,3S)-3-isopropylmalate = (2S)-2-isopropylmalate. The protein operates within amino-acid biosynthesis; L-leucine biosynthesis; L-leucine from 3-methyl-2-oxobutanoate: step 2/4. Catalyzes the isomerization between 2-isopropylmalate and 3-isopropylmalate, via the formation of 2-isopropylmaleate. This is 3-isopropylmalate dehydratase small subunit from Leptospira borgpetersenii serovar Hardjo-bovis (strain L550).